The chain runs to 162 residues: Glutathione peroxidase-like peroxiredoxin GPX5 (162 aa).

Cys-38 bears the S-selanylcysteine mark. Asn-87 is a catalytic residue.

It belongs to the glutathione peroxidase family. In terms of processing, cys-87 is S-selanylated when selenium levels are high. S-selanylation may increase or be important for glutathione peroxidase activity.

It localises to the cytoplasm. The enzyme catalyses 2 glutathione + H2O2 = glutathione disulfide + 2 H2O. It catalyses the reaction a hydroperoxide + [thioredoxin]-dithiol = an alcohol + [thioredoxin]-disulfide + H2O. In terms of biological role, has thioredoxin peroxidase activity. May also have glutathione peroxidase activity, although this activity is controversial. Protects cells against reactive oxygen species, which may include photooxidative stress, hydrogen peroxide and organic hydroperoxides. In Chlamydomonas reinhardtii (Chlamydomonas smithii), this protein is Glutathione peroxidase-like peroxiredoxin GPX5.